The primary structure comprises 2225 residues: Nonribisomal peptide synthetase notE' (2225 aa).

Positions 24–59 (TVRESLSSSPSPLPSLASPVSSGSEPPAFGETQPQS) are disordered. Residues 28–49 (SLSSSPSPLPSLASPVSSGSEP) show a composition bias toward low complexity. The interval 83–482 (QERCKEAPQS…GRRDGQLKIR (400 aa)) is adenylation 1. The region spanning 614-690 (SPTTATELML…EQAQRATPMT (77 aa)) is the Carrier 1 domain. Ser-651 bears the O-(pantetheine 4'-phosphoryl)serine mark. The segment at 730-1142 (EDIYPCTPLQ…DLASPLDQDL (413 aa)) is condensation 1. The tract at residues 1164–1563 (AQAMQQPSRQ…GRRDTQVKVR (400 aa)) is adenylation 2. In terms of domain architecture, Carrier 2 spans 1699–1775 (PVSHGAELRL…DLARCTGEEQ (77 aa)). Residue Ser-1736 is modified to O-(pantetheine 4'-phosphoryl)serine. The condensation 2 stretch occupies residues 1827–2138 (FAFHGEVSID…FILQHQNIDM (312 aa)).

Belongs to the NRP synthetase family.

The enzyme catalyses L-proline + L-tryptophan + 2 ATP = brevianamide F + 2 AMP + 2 diphosphate + 2 H(+). The protein operates within alkaloid biosynthesis. In terms of biological role, nonribisomal peptide synthetase; part of the gene cluster that mediates the biosynthesis of notoamide, a fungal indole alkaloid that belongs to a family of natural products containing a characteristic bicyclo[2.2.2]diazaoctane core. The first step of notoamide biosynthesis involves coupling of L-proline and L-tryptophan by the bimodular NRPS notE', to produce cyclo-L-tryptophan-L-proline called brevianamide F. The reverse prenyltransferase notF' then acts as a deoxybrevianamide E synthase and converts brevianamide F to deoxybrevianamide E via reverse prenylation at C-2 of the indole ring leading to the bicyclo[2.2.2]diazaoctane core. Deoxybrevianamide E is further hydroxylated at C-6 of the indole ring, likely catalyzed by the cytochrome P450 monooxygenase notG', to yield 6-hydroxy-deoxybrevianamide E. 6-hydroxy-deoxybrevianamide E is a specific substrate of the prenyltransferase notC' for normal prenylation at C-7 to produce 6-hydroxy-7-prenyl-deoxybrevianamide, also called notoamide S. As the proposed pivotal branching point in notoamide biosynthesis, notoamide S can be diverted to notoamide E through an oxidative pyran ring closure putatively catalyzed by either notH' cytochrome P450 monooxygenase or the notD' FAD-linked oxidoreductase. This step would be followed by an indole 2,3-epoxidation-initiated pinacol-like rearrangement catalyzed by the notB' FAD-dependent monooxygenase leading to the formation of notoamide C and notoamide D. On the other hand notoamide S is converted to notoamide T by notH' (or notD'), a bifunctional oxidase that also functions as the intramolecular Diels-Alderase responsible for generation of (-)-notoamide T. To generate antipodal (+)-notoaminide T, notH (or notD) in Aspergillus strain MF297-2 is expected to catalyze a Diels-Alder reaction leading to the opposite stereochemistry. The remaining oxidoreductase notD' (or notH') likely catalyzes the oxidative pyran ring formation to yield (-)-stephacidin A. The FAD-dependent monooxygenase notI' is highly similar to notB' and is predicted to catalyze a similar conversion from (-)-stephacidin A to (+)-notoamide B via the 2,3-epoxidation of (-)-stephacidin A followed by a pinacol-type rearrangement. Finally, it remains unclear which enzyme could be responsible for the final hydroxylation steps leading to notoamide A and sclerotiamide. This Aspergillus versicolor protein is Nonribisomal peptide synthetase notE'.